The primary structure comprises 613 residues: Ribosome-associated molecular chaperone SSB1 (613 aa).

Residues 1–391 are nucleotide binding domain (NBD); sequence MAEGVFQGAI…ILTGQSTSED (391 aa). Residues 16-18, K73, 205-207, 271-278, and G342 contribute to the ATP site; these read TTY, GGT, and ERAKRTLS. Residues 392 to 402 form an inter-domain linker region; that stretch reads TKDLLLLDVAP. The substrate binding domain (SBD) stretch occupies residues 403–613; sequence LSLGVGMQGD…RVVTKAMSSR (211 aa). The segment at 516 to 612 is lid domain (SBDalpha); that stretch reads SDEIEKMVNQ…KRVVTKAMSS (97 aa). The short motif at 574–582 is the Nuclear export signal element; the sequence is IESALSDAL.

This sequence belongs to the heat shock protein 70 family. Ssb-type Hsp70 subfamily. In terms of assembly, binds to ribosomes. Binds close to the ribosomal tunnel exit via contacts with both ribosomal proteins and rRNA. Directly interacts with nascent polypeptides. This interaction is dependent on the ribosome-associated complex (RAC). Interacts with SSE1. Interacts with FES1.

The protein resides in the cytoplasm. It catalyses the reaction ATP + H2O = ADP + phosphate + H(+). Functionally, ribosome-bound, Hsp70-type chaperone that assists in the cotranslational folding of newly synthesized proteins in the cytosol. Stimulates folding by interacting with nascent chains, binding to short, largely hydrophobic sequences exposed by unfolded proteins, thereby stabilizing longer, more slowly translated, and aggregation-prone nascent polypeptides and domains that cannot fold stably until fully synthesized. The Hsp70-protein substrate interaction depends on ATP-binding and on allosteric regulation between the NBD and the SBD. The ATP-bound state is characterized by a fast exchange rate of substrate (low affinity state), while in the ADP-bound state exchange is much slower (high affinity state). During the Hsp70 cycle, the chaperone switches between the ATP-bound state (open conformation) and the ADP-bound state (closed conformation) by major conformational rearrangements involving mainly the lid domain. Ssb cooperates with a specific Hsp40/Hsp70 co-chaperone termed the ribosome-associated complex (RAC), which stimulates the ATPase activity of the ribosome-associated pool of Ssbs and switches it to the high affinity substrate binding state. Hsp110 chaperone SSE1 and FES1 act as nucleotide exchange factors that cause substrate release. In Zygosaccharomyces rouxii (strain ATCC 2623 / CBS 732 / NBRC 1130 / NCYC 568 / NRRL Y-229), this protein is Ribosome-associated molecular chaperone SSB1 (SSB1).